The primary structure comprises 122 residues: uncharacterized protein (122 aa).

This is an uncharacterized protein from Homo sapiens (Human).